Reading from the N-terminus, the 149-residue chain is 3-dehydroquinate dehydratase (149 aa).

The active-site Proton acceptor is the Y26. N77, H83, and D90 together coordinate substrate. H103 functions as the Proton donor in the catalytic mechanism. Residues 104 to 105 and R114 contribute to the substrate site; that span reads LS.

This sequence belongs to the type-II 3-dehydroquinase family. As to quaternary structure, homododecamer.

It carries out the reaction 3-dehydroquinate = 3-dehydroshikimate + H2O. Its pathway is metabolic intermediate biosynthesis; chorismate biosynthesis; chorismate from D-erythrose 4-phosphate and phosphoenolpyruvate: step 3/7. Its function is as follows. Catalyzes a trans-dehydration via an enolate intermediate. This Haemophilus influenzae (strain ATCC 51907 / DSM 11121 / KW20 / Rd) protein is 3-dehydroquinate dehydratase (aroQ).